The following is a 230-amino-acid chain: Androgen-dependent TFPI-regulating protein (230 aa).

Over 1–7 (MTKTTTC) the chain is Cytoplasmic. A helical transmembrane segment spans residues 8-28 (VYHFLVLNWYIFLNYHIPQIG). Over 29 to 45 (RNEEKLREFHDGGRSKY) the chain is Extracellular. The helical transmembrane segment at 46 to 66 (LTLLNLLLQAIFFGVACLDDV) threads the bilayer. Residues 67 to 85 (LKRVIGRKDIKFVTSFRDL) are Cytoplasmic-facing. The helical transmembrane segment at 86 to 106 (LFTTMAFPISTFVFLVFWTLF) threads the bilayer. Residues 107 to 120 (HYDRSLVYPKGLDD) lie on the Extracellular side of the membrane. Residues 121–141 (FFPAWVNHAMHTSIFPFSLFE) form a helical membrane-spanning segment. Residues 142–154 (TILRPHNYPSKKL) lie on the Cytoplasmic side of the membrane. A helical membrane pass occupies residues 155 to 175 (GLTLLGAFNFAYIIRILWRYV). Residues 176 to 190 (QTGNWVYPVFDSLSP) lie on the Extracellular side of the membrane. Residues 191-211 (LGIIIFFSAAYILVAGIYLFG) traverse the membrane as a helical segment. At 212–230 (EKINHWKWGAIAKPQMKKN) the chain is on the cytoplasmic side.

This sequence belongs to the AIG1 family.

Its subcellular location is the cell membrane. The catalysed reaction is 9-hexadecanoyloxy-octadecanoate + H2O = 9-hydroxy-octadecanoate + hexadecanoate + H(+). The enzyme catalyses 12-hexadecanoyloxy-octadecanoate + H2O = 12-hydroxyoctadecanoate + hexadecanoate + H(+). It catalyses the reaction 9-(9Z-hexadecenoyloxy)-octadecanoate + H2O = (9Z)-hexadecenoate + 9-hydroxy-octadecanoate + H(+). It carries out the reaction 12-(9Z-hexadecenoyloxy)-octadecanoate + H2O = 12-hydroxyoctadecanoate + (9Z)-hexadecenoate + H(+). The catalysed reaction is 13-(9Z-hexadecenoyloxy)-octadecanoate + H2O = 13-hydroxy-octadecanoate + (9Z)-hexadecenoate + H(+). The enzyme catalyses 9-octadecanoyloxy-octadecanoate + H2O = 9-hydroxy-octadecanoate + octadecanoate + H(+). It catalyses the reaction 12-octadecanoyloxy-octadecanoate + H2O = 12-hydroxyoctadecanoate + octadecanoate + H(+). It carries out the reaction 13-octadecanoyloxy-octadecanoate + H2O = 13-hydroxy-octadecanoate + octadecanoate + H(+). The catalysed reaction is 9-(9Z-octadecenoyloxy)-octadecanoate + H2O = 9-hydroxy-octadecanoate + (9Z)-octadecenoate + H(+). The enzyme catalyses 12-(9Z-octadecenoyloxy)-octadecanoate + H2O = 12-hydroxyoctadecanoate + (9Z)-octadecenoate + H(+). It catalyses the reaction 13-(9Z-octadecenoyloxy)-octadecanoate + H2O = 13-hydroxy-octadecanoate + (9Z)-octadecenoate + H(+). It carries out the reaction 5-(9Z-octadecenoyloxy)-octadecanoate + H2O = 5-hydroxy-octadecanoate + (9Z)-octadecenoate + H(+). In terms of biological role, hydrolyzes bioactive fatty-acid esters of hydroxy-fatty acids (FAHFAs), but not other major classes of lipids. Shows a preference for FAHFAs with branching distal from the carboxylate head group of the lipids. Regulates the expression and the cell-associated anticoagulant activity of the inhibitor TFPI in endothelial cells (in vitro). The polypeptide is Androgen-dependent TFPI-regulating protein (Adtrp) (Mus musculus (Mouse)).